We begin with the raw amino-acid sequence, 333 residues long: Heat shock transcription factor, X-linked member 4 (333 aa).

The tract at residues 1 to 66 (MASQNTEQEY…QDNSPPEDRN (66 aa)) is disordered. Residues 29-39 (GSSPDPNPDSS) show a composition bias toward low complexity. A compositionally biased stretch (polar residues) spans 49–60 (AMSQDPGSQDNS). A DNA-binding region spans residues 79-182 (FRLSFPRKLW…PRLLENIQRK (104 aa)). The segment at 227–275 (QGAPSVQGPSGTQSFRRSGMWSKKSATRHPLGNGPPQEPNGPSWEGTSG) is disordered. The span at 228-242 (GAPSVQGPSGTQSFR) shows a compositional bias: polar residues.

It belongs to the HSF family.

Its subcellular location is the nucleus. This Homo sapiens (Human) protein is Heat shock transcription factor, X-linked member 4.